The following is a 227-amino-acid chain: Inner membrane lipoprotein SadB (227 aa).

Residues 1–21 (MHKNGKFIPLLALGFTFFLSG) form the signal peptide. Cys-22 carries N-palmitoyl cysteine lipidation. Residue Cys-22 is the site of S-diacylglycerol cysteine attachment. Residues 31–68 (VEEMKEQQKEQETKINLLEKQQKEQEAKINLLEKQQAT) are a coiled coil.

As to quaternary structure, homotrimer.

Its subcellular location is the cell inner membrane. In terms of biological role, required for proper surface expression of the autotransporter adhesin SadA. Could be directly involved in the biogenesis of functionally active SadA. In Salmonella typhimurium (strain LT2 / SGSC1412 / ATCC 700720), this protein is Inner membrane lipoprotein SadB.